We begin with the raw amino-acid sequence, 98 residues long: Large ribosomal subunit protein uL23 (98 aa).

This sequence belongs to the universal ribosomal protein uL23 family. Part of the 50S ribosomal subunit. Contacts protein L29, and trigger factor when it is bound to the ribosome.

Its function is as follows. One of the early assembly proteins it binds 23S rRNA. One of the proteins that surrounds the polypeptide exit tunnel on the outside of the ribosome. Forms the main docking site for trigger factor binding to the ribosome. The sequence is that of Large ribosomal subunit protein uL23 from Hahella chejuensis (strain KCTC 2396).